A 265-amino-acid chain; its full sequence is 3-methyl-2-oxobutanoate hydroxymethyltransferase (265 aa).

Mg(2+) contacts are provided by Asp-45 and Asp-84. 3-methyl-2-oxobutanoate-binding positions include 45-46 (DS), Asp-84, and Lys-112. Glu-114 provides a ligand contact to Mg(2+). Catalysis depends on Glu-181, which acts as the Proton acceptor.

The protein belongs to the PanB family. In terms of assembly, homodecamer; pentamer of dimers. It depends on Mg(2+) as a cofactor.

The protein resides in the cytoplasm. The catalysed reaction is 3-methyl-2-oxobutanoate + (6R)-5,10-methylene-5,6,7,8-tetrahydrofolate + H2O = 2-dehydropantoate + (6S)-5,6,7,8-tetrahydrofolate. Its pathway is cofactor biosynthesis; (R)-pantothenate biosynthesis; (R)-pantoate from 3-methyl-2-oxobutanoate: step 1/2. Catalyzes the reversible reaction in which hydroxymethyl group from 5,10-methylenetetrahydrofolate is transferred onto alpha-ketoisovalerate to form ketopantoate. The protein is 3-methyl-2-oxobutanoate hydroxymethyltransferase of Yersinia pseudotuberculosis serotype IB (strain PB1/+).